Here is a 140-residue protein sequence, read N- to C-terminus: Acyl carrier protein 1, chloroplastic (140 aa).

Residues 1-56 (MASAAAGASICIKSASFSPLAPGRISSLRSVSLPVSRKSFPSLKSSKSSFALRVSC) constitute a chloroplast transit peptide. The region spanning 60-135 (PETVAKVCGI…DAADLIEKLM (76 aa)) is the Carrier domain. An O-(pantetheine 4'-phosphoryl)serine modification is found at Ser95.

This sequence belongs to the acyl carrier protein (ACP) family. Post-translationally, 4'-phosphopantetheine is transferred from CoA to a specific serine of apo-ACP by acpS. This modification is essential for activity because fatty acids are bound in thioester linkage to the sulfhydryl of the prosthetic group.

Its subcellular location is the plastid. The protein resides in the chloroplast. Its pathway is lipid metabolism; fatty acid biosynthesis. Functionally, carrier of the growing fatty acid chain in fatty acid biosynthesis. The protein is Acyl carrier protein 1, chloroplastic (ACL1.1) of Cuphea lanceolata (Cigar flower).